Here is a 261-residue protein sequence, read N- to C-terminus: Class II histocompatibility antigen, M beta 1 chain (261 aa).

A signal peptide spans 1 to 18 (MAALWLLLLVLSLHCMGA). The interval 19 to 112 (GGFVAHVEST…PFWNALTHRT (94 aa)) is beta-1. Over 19 to 218 (GGFVAHVEST…PGLSPIQTVK (200 aa)) the chain is Lumenal. 3 disulfides stabilise this stretch: Cys-29–Cys-97, Cys-43–Cys-53, and Cys-135–Cys-192. N-linked (GlcNAc...) asparagine glycosylation is present at Asn-75. The interval 113-207 (RPPSVRVAQT…GTSEPIRGDW (95 aa)) is beta-2. In terms of domain architecture, Ig-like C1-type spans 114–204 (PPSVRVAQTT…QHSGTSEPIR (91 aa)). A connecting peptide region spans residues 208–218 (TPGLSPIQTVK). The helical transmembrane segment at 219 to 239 (VSVSAATLGLGFIIFCVGFFR) threads the bilayer. Topologically, residues 240–261 (WRKSHSSSYTPLSGSTYPEGRH) are cytoplasmic. The short motif at 248-251 (YTPL) is the YXXZ motif element.

Belongs to the MHC class II family. Heterodimer of an alpha chain (DMA) and a beta chain (DMB). Interacts with MHCII; this interaction mediates rapid selection of high-affinity peptides.

It localises to the late endosome membrane. The protein resides in the lysosome membrane. Plays a critical role in catalyzing the release of class II-associated invariant chain peptide (CLIP) from newly synthesized MHC class II molecules and freeing the peptide binding site for acquisition of antigenic peptides. This Mus musculus (Mouse) protein is Class II histocompatibility antigen, M beta 1 chain (H2-DMb1).